Reading from the N-terminus, the 146-residue chain is Snaclec agkicetin-C subunit beta (146 aa).

The first 23 residues, 1–23, serve as a signal peptide directing secretion; the sequence is MGRFIFVSFGLLVVFLSLSGTGA. Intrachain disulfides connect Cys-25/Cys-36, Cys-53/Cys-142, and Cys-119/Cys-134. The 112-residue stretch at 32–143 folds into the C-type lectin domain; that stretch reads YEGNCYLVVK…CSRTQPFVCK (112 aa).

Belongs to the snaclec family. Heterodimer of subunits alpha and beta; disulfide-linked. As to expression, expressed by the venom gland.

It is found in the secreted. In terms of biological role, is a potent glycoprotein Ibalpha (GP1BA) antagonist. Concentration-dependently inhibits botrocetin-, ristocetin- and low dose thrombin-induced platelet aggregation. Inhibits platelet adhesion only through inhibiting the vWF interaction with GP1BA, but has minimal effect on other platelet receptors, such as alpha-IIb/beta-3 (ITGA2B/ITGB3) or alpha-2/beta-1 (ITGA2/ITGB1). Causes an instant severe thrombocytopenia in rats and is not lethal to mice. This Deinagkistrodon acutus (Hundred-pace snake) protein is Snaclec agkicetin-C subunit beta.